Here is a 341-residue protein sequence, read N- to C-terminus: Glyceraldehyde-3-phosphate dehydrogenase (341 aa).

NAD(+) contacts are provided by residues 11–12 and Gly110; that span reads TI. 139–141 contacts D-glyceraldehyde 3-phosphate; the sequence is SCN. The Nucleophile role is filled by Cys140. Arg168 contributes to the NAD(+) binding site. D-glyceraldehyde 3-phosphate is bound at residue 194-195; that stretch reads HG. Gln302 contributes to the NAD(+) binding site.

The protein belongs to the glyceraldehyde-3-phosphate dehydrogenase family. In terms of assembly, homotetramer.

It is found in the cytoplasm. It carries out the reaction D-glyceraldehyde 3-phosphate + phosphate + NADP(+) = (2R)-3-phospho-glyceroyl phosphate + NADPH + H(+). The enzyme catalyses D-glyceraldehyde 3-phosphate + phosphate + NAD(+) = (2R)-3-phospho-glyceroyl phosphate + NADH + H(+). The protein operates within carbohydrate degradation; glycolysis; pyruvate from D-glyceraldehyde 3-phosphate: step 1/5. The sequence is that of Glyceraldehyde-3-phosphate dehydrogenase from Methanoculleus marisnigri (strain ATCC 35101 / DSM 1498 / JR1).